Reading from the N-terminus, the 332-residue chain is Homeobox protein SIX3 (332 aa).

Residues Ala72–Pro119 form an interaction with TLE5 region. Positions Gly206 to Ala265 form a DNA-binding region, homeobox. The bind to RHO promoter stretch occupies residues Asn232–Ser234. Disordered stretches follow at residues Asn232–Gly251 and Arg258–Val332. Residues Ser293–Ser309 are compositionally biased toward low complexity. A compositionally biased stretch (polar residues) spans Thr316–Val332.

This sequence belongs to the SIX/Sine oculis homeobox family. As to quaternary structure, interacts with EYA4; translocates EYA4 from the cytoplasm to the nucleus and promotes activation of their target genes. Interacts with MTA1 and HDAC2; represses its own transcription. Interacts with MTA1; facilitates the binding of SIX3 to the core DNA motif of SIX3 promoter. Interacts with EYA1; promotes EYA1 translocation to the nucleus. Interacts with TLE1 and TLE5 (via Q domain); can act in combination with either TLE1 and/or TLE5 leading to transcriptional repression or activation, respectively. Interacts (via homeobox) with NR4A3; differentially regulates the transcriptional activities NR4A3. Interacts with GMNN. Interacts with TLE4.

Its subcellular location is the nucleus. Functionally, transcriptional regulator which can act as both a transcriptional repressor and activator by binding a ATTA homeodomain core recognition sequence on these target genes. During forebrain development represses WNT1 expression allowing zona limitans intrathalamica formation and thereby ensuring proper anterio-posterior patterning of the diencephalon and formation of the rostral diencephalon. Acts as a direct upstream activator of SHH expression in the rostral diencephalon ventral midline and that in turn SHH maintains its expression. In addition, Six3 activity is required for the formation of the telencephalon. During postnatal stages of brain development is necessary for ependymal cell maturation by promoting the maturation of radial glia into ependymal cells through regulation of neuroblast proliferation and migration. Acts on the proliferation and differentiation of neural progenitor cells through activating transcription of CCND1 and CCND2. During early lens formation plays a role in lens induction and specification by activating directly PAX6 in the presumptive lens ectoderm. In turn PAX6 activates SIX3 resulting in activation of PDGFRA and CCND1 promoting cell proliferation. Also is required for the neuroretina development by directly suppressing WNT8B expression in the anterior neural plate territory. Its action during retina development and lens morphogenesis is TLE5 and TLE4-dependent manner. Furthermore, during eye development regulates several genes expression. Before and during early lens development represses the CRYGF promoter by binding a SIX repressor element. Directly activates RHO transcription, or cooperates with CRX or NRL. Six3 also functions in the formation of the proximodistal axis of the optic cup, and promotes the formation of optic vesicles-like structures. During pituitary development, acts in parallel or alternatively with HESX1 to control cell proliferation through Wnt/beta-catenin pathway. Plays a role in eye development by suppressing WNT1 expression and in dorsal-ventral patterning by repressing BMP signaling pathway. This is Homeobox protein SIX3 (SIX3) from Homo sapiens (Human).